Consider the following 216-residue polypeptide: Probable GTP-binding protein EngB (216 aa).

The EngB-type G domain occupies 37 to 214 (DGLEVAFAGR…RAAMIRLLDE (178 aa)). Residues 45 to 52 (GRSNVGKS), 72 to 76 (GRTQE), 92 to 95 (DMPG), 159 to 162 (TKAD), and 193 to 195 (TSS) contribute to the GTP site. Positions 52 and 74 each coordinate Mg(2+).

The protein belongs to the TRAFAC class TrmE-Era-EngA-EngB-Septin-like GTPase superfamily. EngB GTPase family. The cofactor is Mg(2+).

In terms of biological role, necessary for normal cell division and for the maintenance of normal septation. The polypeptide is Probable GTP-binding protein EngB (Rhodopseudomonas palustris (strain HaA2)).